The following is a 300-amino-acid chain: Ribosomal RNA small subunit methyltransferase H (300 aa).

S-adenosyl-L-methionine-binding positions include 33–35 (AGH), aspartate 52, phenylalanine 86, aspartate 97, and glutamine 104.

It belongs to the methyltransferase superfamily. RsmH family.

The protein resides in the cytoplasm. The catalysed reaction is cytidine(1402) in 16S rRNA + S-adenosyl-L-methionine = N(4)-methylcytidine(1402) in 16S rRNA + S-adenosyl-L-homocysteine + H(+). Specifically methylates the N4 position of cytidine in position 1402 (C1402) of 16S rRNA. The chain is Ribosomal RNA small subunit methyltransferase H from Aliarcobacter butzleri (strain RM4018) (Arcobacter butzleri).